The following is a 486-amino-acid chain: Iron-sulfur cluster assembly SufBD family protein ycf24 (486 aa).

It belongs to the iron-sulfur cluster assembly SufBD family.

It localises to the plastid. It is found in the chloroplast. The polypeptide is Iron-sulfur cluster assembly SufBD family protein ycf24 (ycf24) (Trieres chinensis (Marine centric diatom)).